A 363-amino-acid chain; its full sequence is NADH-quinone oxidoreductase subunit H (363 aa).

The next 10 membrane-spanning stretches (helical) occupy residues 29 to 49, 62 to 82, 96 to 116, 127 to 147, 163 to 183, 202 to 222, 238 to 257, 264 to 286, 299 to 319, and 339 to 359; these read VLKI…YVVW, GPMY…KLLF, FIIA…VVPF, VGLL…ILAG, AAQV…VMIA, FFDW…VSGV, EIVA…LFFL, ILVS…QGWV, KGGW…YIWF, and FIPL…YGVI.

Belongs to the complex I subunit 1 family. NDH-1 is composed of 14 different subunits. Subunits NuoA, H, J, K, L, M, N constitute the membrane sector of the complex.

It localises to the cell inner membrane. It carries out the reaction a quinone + NADH + 5 H(+)(in) = a quinol + NAD(+) + 4 H(+)(out). Functionally, NDH-1 shuttles electrons from NADH, via FMN and iron-sulfur (Fe-S) centers, to quinones in the respiratory chain. The immediate electron acceptor for the enzyme in this species is believed to be ubiquinone. Couples the redox reaction to proton translocation (for every two electrons transferred, four hydrogen ions are translocated across the cytoplasmic membrane), and thus conserves the redox energy in a proton gradient. This subunit may bind ubiquinone. This is NADH-quinone oxidoreductase subunit H from Xanthomonas oryzae pv. oryzae (strain PXO99A).